The chain runs to 373 residues: Queuine tRNA-ribosyltransferase (373 aa).

The active-site Proton acceptor is the Asp93. Residues 93–97 (DSGGF), Asp147, Gln189, and Gly216 each bind substrate. The interval 247 to 253 (GVGAPED) is RNA binding. Asp266 acts as the Nucleophile in catalysis. Positions 271–275 (TRIAR) are RNA binding; important for wobble base 34 recognition. Residues Cys304, Cys306, Cys309, and His335 each coordinate Zn(2+).

It belongs to the queuine tRNA-ribosyltransferase family. Homodimer. Within each dimer, one monomer is responsible for RNA recognition and catalysis, while the other monomer binds to the replacement base PreQ1. Zn(2+) is required as a cofactor.

The enzyme catalyses 7-aminomethyl-7-carbaguanine + guanosine(34) in tRNA = 7-aminomethyl-7-carbaguanosine(34) in tRNA + guanine. It participates in tRNA modification; tRNA-queuosine biosynthesis. Its function is as follows. Catalyzes the base-exchange of a guanine (G) residue with the queuine precursor 7-aminomethyl-7-deazaguanine (PreQ1) at position 34 (anticodon wobble position) in tRNAs with GU(N) anticodons (tRNA-Asp, -Asn, -His and -Tyr). Catalysis occurs through a double-displacement mechanism. The nucleophile active site attacks the C1' of nucleotide 34 to detach the guanine base from the RNA, forming a covalent enzyme-RNA intermediate. The proton acceptor active site deprotonates the incoming PreQ1, allowing a nucleophilic attack on the C1' of the ribose to form the product. After dissociation, two additional enzymatic reactions on the tRNA convert PreQ1 to queuine (Q), resulting in the hypermodified nucleoside queuosine (7-(((4,5-cis-dihydroxy-2-cyclopenten-1-yl)amino)methyl)-7-deazaguanosine). The sequence is that of Queuine tRNA-ribosyltransferase from Halothermothrix orenii (strain H 168 / OCM 544 / DSM 9562).